We begin with the raw amino-acid sequence, 388 residues long: DNA primase small subunit PriS (388 aa).

Active-site residues include D100, D102, and D288.

Belongs to the eukaryotic-type primase small subunit family. As to quaternary structure, heterodimer of a small subunit (PriS) and a large subunit (PriL). Mg(2+) serves as cofactor. Requires Mn(2+) as cofactor.

Functionally, catalytic subunit of DNA primase, an RNA polymerase that catalyzes the synthesis of short RNA molecules used as primers for DNA polymerase during DNA replication. The small subunit contains the primase catalytic core and has DNA synthesis activity on its own. Binding to the large subunit stabilizes and modulates the activity, increasing the rate of DNA synthesis while decreasing the length of the DNA fragments, and conferring RNA synthesis capability. The DNA polymerase activity may enable DNA primase to also catalyze primer extension after primer synthesis. May also play a role in DNA repair. This is DNA primase small subunit PriS from Methanospirillum hungatei JF-1 (strain ATCC 27890 / DSM 864 / NBRC 100397 / JF-1).